Reading from the N-terminus, the 105-residue chain is Met repressor (105 aa).

This sequence belongs to the MetJ family. As to quaternary structure, homodimer.

The protein localises to the cytoplasm. In terms of biological role, this regulatory protein, when combined with SAM (S-adenosylmethionine) represses the expression of the methionine regulon and of enzymes involved in SAM synthesis. This is Met repressor from Sodalis glossinidius (strain morsitans).